We begin with the raw amino-acid sequence, 245 residues long: Ribonuclease PH (245 aa).

Phosphate contacts are provided by residues Arg86 and 124–126 (GTR).

The protein belongs to the RNase PH family. As to quaternary structure, homohexameric ring arranged as a trimer of dimers.

The catalysed reaction is tRNA(n+1) + phosphate = tRNA(n) + a ribonucleoside 5'-diphosphate. Its function is as follows. Phosphorolytic 3'-5' exoribonuclease that plays an important role in tRNA 3'-end maturation. Removes nucleotide residues following the 3'-CCA terminus of tRNAs; can also add nucleotides to the ends of RNA molecules by using nucleoside diphosphates as substrates, but this may not be physiologically important. Probably plays a role in initiation of 16S rRNA degradation (leading to ribosome degradation) during starvation. In Bacillus cereus (strain G9842), this protein is Ribonuclease PH.